Reading from the N-terminus, the 118-residue chain is uncharacterized protein (118 aa).

The cysteines at positions 11 and 14 are disulfide-linked.

This sequence belongs to the ArsC family.

This is an uncharacterized protein from Bacillus subtilis (strain 168).